We begin with the raw amino-acid sequence, 640 residues long: MTAAPTAGGVVTSGVGVAGVGVGLLGMFGPVRVVHVGWLLPLSGVHIELDRLGGFFMALTGAVAAPVGCYLIGYVRREHLGRVPMAVVPLFVAAMLLVPAAGSVTTFLLAWELMAIASLILVLSEHARPQVRSAGLWYAVMTQLGFIAILVGLVVLAAAGGSDRFAGLGAVCDGVRAAVFMLTLVGFGSKAGLVPLHAWLPRAHPEAPSPVSALMSAAMVNLGIYGIVRFDLQLLGPGPRWWGLALLAVGGTSALYGVLQASVAADLKRLLAYSTTENMGLITLALGAATLFADTGAYGPASIAAAAAMLHMIAHAAFKSLAFMAAGSVLAATGLRDLDLLGGLARRMPATTVFFGVAALGACGLPLGAGFVSEWLLVQSLIHAAPGHDPIVALTTPLAVGVVALATGLSVAAMTKAFGIGFLARPRSTQAEAAREAPASMRAGMAIAAGACLVLAVAPLLVAPMVRRAAATLPAAQAVKFTGLGAVVRLPAMSGSIAPGVIAAAVLAAALAVAVLARWRFRRRPAPARLPLWACGAADLTVRMQYTATSFAEPLQRVFGDVLRPDTDIEVTHTAESRYMAERITYRTAVADAIEQRLYTPVVGAVAAMAELLRRAHTGSVHRYLAYGALGVLIVLVVAR.

A run of 14 helical transmembrane segments spans residues 8–28 (GGVVTSGVGVAGVGVGLLGMF), 52–72 (LGGFFMALTGAVAAPVGCYLI), 90–110 (LFVAAMLLVPAAGSVTTFLLA), 136–156 (LWYAVMTQLGFIAILVGLVVL), 179–199 (VFMLTLVGFGSKAGLVPLHAW), 208–228 (PSPVSALMSAAMVNLGIYGIV), 241–261 (WWGLALLAVGGTSALYGVLQA), 277–297 (ENMGLITLALGAATLFADTGA), 298–318 (YGPASIAAAAAMLHMIAHAAF), 352–372 (TVFFGVAALGACGLPLGAGFV), 391–411 (IVALTTPLAVGVVALATGLSV), 446–466 (AIAAGACLVLAVAPLLVAPMV), 497–517 (IAPGVIAAAVLAAALAVAVLA), and 619–639 (GSVHRYLAYGALGVLIVLVVA).

Belongs to the complex I subunit 4 family.

Its subcellular location is the cell membrane. This is an uncharacterized protein from Mycobacterium tuberculosis (strain CDC 1551 / Oshkosh).